Here is a 332-residue protein sequence, read N- to C-terminus: DNA-directed RNA polymerase subunit alpha (332 aa).

The alpha N-terminal domain (alpha-NTD) stretch occupies residues 1-234 (MIEYVIPKKL…NHLQIITDSL (234 aa)). The segment at 264–332 (AVYSKKIDEL…KFGLSLKKGG (69 aa)) is alpha C-terminal domain (alpha-CTD).

The protein belongs to the RNA polymerase alpha chain family. Homodimer. The RNAP catalytic core consists of 2 alpha, 1 beta, 1 beta' and 1 omega subunit. When a sigma factor is associated with the core the holoenzyme is formed, which can initiate transcription.

It carries out the reaction RNA(n) + a ribonucleoside 5'-triphosphate = RNA(n+1) + diphosphate. DNA-dependent RNA polymerase catalyzes the transcription of DNA into RNA using the four ribonucleoside triphosphates as substrates. The chain is DNA-directed RNA polymerase subunit alpha from Pseudothermotoga lettingae (strain ATCC BAA-301 / DSM 14385 / NBRC 107922 / TMO) (Thermotoga lettingae).